A 61-amino-acid chain; its full sequence is Large ribosomal subunit protein bL32 (61 aa).

Residues 1–44 (MAVQQNRKSRSRRDMRRSHDALTENALTVDQTTGETHRRHHVTK) are disordered. Residues 7-16 (RKSRSRRDMR) show a composition bias toward basic residues. The segment covering 25–34 (NALTVDQTTG) has biased composition (polar residues).

This sequence belongs to the bacterial ribosomal protein bL32 family.

The protein is Large ribosomal subunit protein bL32 of Acinetobacter baylyi (strain ATCC 33305 / BD413 / ADP1).